The chain runs to 180 residues: Alpha-S2-casein-like A (180 aa).

A signal peptide spans 1–15 (MRFFVFTCLLAVALA). Residues serine 23 and serine 25 each carry the phosphoserine modification. Residues 46–66 (PTNQETPSVSSSEESVEVQTE) are disordered.

Belongs to the alpha-casein family. Mammary gland specific. Secreted in milk.

The protein resides in the secreted. Important role in the capacity of milk to transport calcium phosphate. The chain is Alpha-S2-casein-like A (CSN1S2A) from Oryctolagus cuniculus (Rabbit).